The primary structure comprises 405 residues: S-adenosylmethionine:tRNA ribosyltransferase-isomerase (405 aa).

Belongs to the QueA family. Monomer.

The protein resides in the cytoplasm. The enzyme catalyses 7-aminomethyl-7-carbaguanosine(34) in tRNA + S-adenosyl-L-methionine = epoxyqueuosine(34) in tRNA + adenine + L-methionine + 2 H(+). It participates in tRNA modification; tRNA-queuosine biosynthesis. In terms of biological role, transfers and isomerizes the ribose moiety from AdoMet to the 7-aminomethyl group of 7-deazaguanine (preQ1-tRNA) to give epoxyqueuosine (oQ-tRNA). This Psychrobacter cryohalolentis (strain ATCC BAA-1226 / DSM 17306 / VKM B-2378 / K5) protein is S-adenosylmethionine:tRNA ribosyltransferase-isomerase.